We begin with the raw amino-acid sequence, 492 residues long: Catalase isozyme C (492 aa).

Residue R62 coordinates heme. H65 is a catalytic residue. R102 contributes to the heme binding site. N138 is an active-site residue. F151 serves as a coordination point for heme. Phosphotyrosine; by STRK1 is present on Y210. The 3-(S-cysteinyl)-tyrosine (Cys-Tyr) cross-link spans 325 to 348; sequence CPGIIVPGIYYSDDKLLQTRIFSY. Positions 344, 348, and 355 each coordinate heme. A Peroxisome targeting signal motif is present at residues 484–492; sequence SRLSAKPSM.

It belongs to the catalase family. As to quaternary structure, homotetramer. Interacts with GLO1 and GLO4; these interactions are disturbed by alpha-hydroxy-2-pyridinemethanesulfonic acid (HPMS) and salicylic acid (SA). Interacts with STRK1 at the plasma membrane. Heme serves as cofactor. Activated by STRK1-mediated phosphorylation at Tyr-210 upon salt and oxidative stress. As to expression, highly expressed in mature leaves. Mainly expressed in leaf blades, stems, panicles, leaf sheaths, and culms, but barely in roots.

It is found in the peroxisome. The protein resides in the glyoxysome. It localises to the cell membrane. The catalysed reaction is 2 H2O2 = O2 + 2 H2O. Its activity is regulated as follows. Strongly inhibited by beta-mercaptoethanol, sodium azide and potassium cyanide. Slightly repressed by 3-amino-1,2,4-triazole (3-AT). Activity is repressed proportionally to increased concentration of NaCl, KCl, LiCl and MgCl(2). Occurs in almost all aerobically respiring organisms and serves to protect cells from the toxic effects of hydrogen peroxide. Responsible for the redox homeostasis in leaves. Prevents nitric oxide (NO) accumulation and subsequent NO-mediated leaf cell death as well as the S-nitrosylation of specific proteins (e.g. glyceraldehyde 3-phosphate dehydrogenase and thioredoxin) by degrading H(2)O(2). Involved in photorespiration. Promotes drought stress tolerance and recovery. Involved in NO-mediated enhanced tolerance to zinc oxide nanoparticles (ZnO NPs)-induced phytotoxicity. Participates in melatonin-mediated detoxification. The chain is Catalase isozyme C from Oryza sativa subsp. japonica (Rice).